Reading from the N-terminus, the 404-residue chain is cAMP-dependent protein kinase regulatory subunit (404 aa).

The segment at 14-144 (LTDHELLRIP…RLKTAIAGNF (131 aa)) is dimerization and phosphorylation. A Phosphoserine modification is found at serine 105. 3',5'-cyclic AMP contacts are provided by residues 145-276 (LFSH…EKFP), glutamate 223, arginine 232, 277-398 (CCRH…GVEE), glutamate 344, and arginine 353.

Belongs to the cAMP-dependent kinase regulatory chain family. In terms of assembly, tetramer, composed of 2 regulatory (R) and 2 catalytic (C) subunits. In the presence of cAMP it dissociates into 2 active monomeric C subunits and an R dimer.

In terms of biological role, cAMP-dependent protein kinase PKA regulatory subunit. This is cAMP-dependent protein kinase regulatory subunit (PKAR) from Colletotrichum trifolii.